Reading from the N-terminus, the 735-residue chain is Rho GTPase-activating protein SYDE1 (735 aa).

Disordered regions lie at residues 1-253 (MAEP…PYEV), 601-655 (PDTR…AGDW), and 669-706 (FLSGPDYDHVTGSDSEEDEDESGEPRGTTDFEDEFDAP). The segment covering 14-47 (RGREKLPRKKSDAKDRGRPAQRSEPKPPEPEPRV) has biased composition (basic and acidic residues). Over residues 151-160 (PTKTSRTKSP) the composition is skewed to low complexity. Phosphoserine occurs at positions 224, 231, 235, and 244. Positions 249-366 (RPYEVGPSAR…FRGCQAQQLA (118 aa)) constitute a C2 domain. The Rho-GAP domain occupies 398–604 (LPLQLLVERE…YLLQSWPDTR (207 aa)). Positions 669–679 (FLSGPDYDHVT) are enriched in basic and acidic residues. 2 positions are modified to phosphoserine: serine 681 and serine 683.

Post-translationally, palmitoylated. Probably palmitoylated by ZDHHC3 and ZDHHC7.

Its function is as follows. GTPase activator for the Rho-type GTPases. As a GCM1 downstream effector, it is involved in placental development and positively regulates trophoblast cells migration. It regulates cytoskeletal remodeling by controlling the activity of Rho GTPases including RHOA, CDC42 and RAC1. This chain is Rho GTPase-activating protein SYDE1 (Syde1), found in Rattus norvegicus (Rat).